The sequence spans 370 residues: 4-hydroxy-3-methylbut-2-en-1-yl diphosphate synthase (flavodoxin) (370 aa).

[4Fe-4S] cluster is bound by residues Cys-265, Cys-268, Cys-300, and Glu-307.

It belongs to the IspG family. It depends on [4Fe-4S] cluster as a cofactor.

The catalysed reaction is (2E)-4-hydroxy-3-methylbut-2-enyl diphosphate + oxidized [flavodoxin] + H2O + 2 H(+) = 2-C-methyl-D-erythritol 2,4-cyclic diphosphate + reduced [flavodoxin]. Its pathway is isoprenoid biosynthesis; isopentenyl diphosphate biosynthesis via DXP pathway; isopentenyl diphosphate from 1-deoxy-D-xylulose 5-phosphate: step 5/6. In terms of biological role, converts 2C-methyl-D-erythritol 2,4-cyclodiphosphate (ME-2,4cPP) into 1-hydroxy-2-methyl-2-(E)-butenyl 4-diphosphate. The protein is 4-hydroxy-3-methylbut-2-en-1-yl diphosphate synthase (flavodoxin) of Symbiobacterium thermophilum (strain DSM 24528 / JCM 14929 / IAM 14863 / T).